We begin with the raw amino-acid sequence, 929 residues long: Type I restriction enzyme SauCOLORF180P endonuclease subunit (929 aa).

A Helicase ATP-binding domain is found at 254–418 (QQATETGNNG…DGRTTADIFG (165 aa)). Residue 268–274 (TTGSGKT) participates in ATP binding.

Belongs to the HsdR family. In terms of assembly, the type I restriction/modification system is composed of three polypeptides R, M and S.

It carries out the reaction Endonucleolytic cleavage of DNA to give random double-stranded fragments with terminal 5'-phosphates, ATP is simultaneously hydrolyzed.. Its function is as follows. The restriction (R) subunit of a type I restriction enzyme that recognizes an undetermined sequence and cleaves a random distance away. Subunit R is required for both nuclease and ATPase activities, but not for modification. After locating a non-methylated recognition site, the enzyme complex serves as a molecular motor that translocates DNA in an ATP-dependent manner until a collision occurs that triggers cleavage. The protein is Type I restriction enzyme SauCOLORF180P endonuclease subunit of Staphylococcus aureus (strain COL).